A 1493-amino-acid chain; its full sequence is ABC transporter C family member 7 (1493 aa).

The next 10 membrane-spanning stretches (helical) occupy residues F21–V41, V70–F90, L102–I122, V140–Y160, L165–C185, I309–L329, Y343–V360, W423–Y443, L448–A468, and S535–L555. Residues I309 to Q590 form the ABC transmembrane type-1 1 domain. The 224-residue stretch at V624 to A847 folds into the ABC transporter 1 domain. Residue G659–S666 participates in ATP binding. The interval A863–E898 is disordered. Residue S888 is modified to Phosphoserine. Helical transmembrane passes span L915–L935, G959–V979, F1038–M1055, A1059–I1081, L1153–I1173, and F1177–W1197. The region spanning V922–N1204 is the ABC transmembrane type-1 2 domain. One can recognise an ABC transporter 2 domain in the interval I1241–A1475. G1275–S1282 lines the ATP pocket.

This sequence belongs to the ABC transporter superfamily. ABCC family. Conjugate transporter (TC 3.A.1.208) subfamily. As to expression, ubiquitous.

Its subcellular location is the membrane. The enzyme catalyses ATP + H2O + xenobioticSide 1 = ADP + phosphate + xenobioticSide 2.. Its function is as follows. Pump for glutathione S-conjugates. In Arabidopsis thaliana (Mouse-ear cress), this protein is ABC transporter C family member 7 (ABCC7).